The primary structure comprises 198 residues: Chromophore lyase CpcT/CpeT 3 (198 aa).

It belongs to the CpcT/CpeT biliprotein lyase family.

Its function is as follows. Covalently attaches a chromophore to Cys residue(s) of phycobiliproteins. The polypeptide is Chromophore lyase CpcT/CpeT 3 (Synechococcus sp. (strain JA-3-3Ab) (Cyanobacteria bacterium Yellowstone A-Prime)).